The primary structure comprises 137 residues: Putative pre-16S rRNA nuclease (137 aa).

Belongs to the YqgF nuclease family.

It localises to the cytoplasm. Functionally, could be a nuclease involved in processing of the 5'-end of pre-16S rRNA. This Bacillus mycoides (strain KBAB4) (Bacillus weihenstephanensis) protein is Putative pre-16S rRNA nuclease.